The chain runs to 311 residues: tRNA-cytidine(32) 2-sulfurtransferase (311 aa).

The PP-loop motif motif lies at 47–52; sequence SGGKDS. The [4Fe-4S] cluster site is built by C122, C125, and C213.

Belongs to the TtcA family. As to quaternary structure, homodimer. It depends on Mg(2+) as a cofactor. [4Fe-4S] cluster serves as cofactor.

The protein resides in the cytoplasm. It catalyses the reaction cytidine(32) in tRNA + S-sulfanyl-L-cysteinyl-[cysteine desulfurase] + AH2 + ATP = 2-thiocytidine(32) in tRNA + L-cysteinyl-[cysteine desulfurase] + A + AMP + diphosphate + H(+). It participates in tRNA modification. In terms of biological role, catalyzes the ATP-dependent 2-thiolation of cytidine in position 32 of tRNA, to form 2-thiocytidine (s(2)C32). The sulfur atoms are provided by the cysteine/cysteine desulfurase (IscS) system. This chain is tRNA-cytidine(32) 2-sulfurtransferase, found in Pectobacterium carotovorum subsp. carotovorum (strain PC1).